The following is a 697-amino-acid chain: Pentatricopeptide repeat-containing protein 1, mitochondrial (697 aa).

A mitochondrion-targeting transit peptide spans Met1 to His36. PPR repeat units follow at residues Arg257–Lys288 and Ser294–Phe328.

The protein localises to the mitochondrion. Mitochondrial RNA-binding protein required for the stability of the cox2 and cox3 mRNAs. The sequence is that of Pentatricopeptide repeat-containing protein 1, mitochondrial (ppr1) from Schizosaccharomyces pombe (strain 972 / ATCC 24843) (Fission yeast).